The chain runs to 435 residues: 3-phosphoshikimate 1-carboxyvinyltransferase (435 aa).

3 residues coordinate 3-phosphoshikimate: Lys-15, Ser-16, and Arg-20. Lys-15 is a phosphoenolpyruvate binding site. The phosphoenolpyruvate site is built by Gly-96 and Arg-124. Residues Ser-169, Gln-171, Thr-195, Asp-319, and Lys-346 each coordinate 3-phosphoshikimate. Gln-171 contacts phosphoenolpyruvate. Asp-319 serves as the catalytic Proton acceptor. Phosphoenolpyruvate is bound by residues Arg-350 and Arg-394.

The protein belongs to the EPSP synthase family. Monomer.

Its subcellular location is the cytoplasm. It catalyses the reaction 3-phosphoshikimate + phosphoenolpyruvate = 5-O-(1-carboxyvinyl)-3-phosphoshikimate + phosphate. It participates in metabolic intermediate biosynthesis; chorismate biosynthesis; chorismate from D-erythrose 4-phosphate and phosphoenolpyruvate: step 6/7. Catalyzes the transfer of the enolpyruvyl moiety of phosphoenolpyruvate (PEP) to the 5-hydroxyl of shikimate-3-phosphate (S3P) to produce enolpyruvyl shikimate-3-phosphate and inorganic phosphate. The protein is 3-phosphoshikimate 1-carboxyvinyltransferase of Chloroherpeton thalassium (strain ATCC 35110 / GB-78).